Consider the following 73-residue polypeptide: Adipokinetic prohormone type 2 (73 aa).

An N-terminal signal peptide occupies residues 1–20; it reads MCRIFIVLLVVAALAIIIEG. Gln21 is modified (pyrrolidone carboxylic acid). Asn30 bears the Asparagine amide mark. A propeptide spanning residues 34-73 is cleaved from the precursor; the sequence is SISSEQINDDCNPEEAIFQIYKLIVSEGERIRACQRDGKM.

As to expression, expressed in corpora cardiaca (CC), corpora allata (CA) and gnathal ganglion (GNG) (at protein level). Expression in CC and CA detected in all animals, expression in GNG detected in few animals (at protein level). Not expressed in antennal lobe (AL) (at protein level).

The protein resides in the secreted. Its function is as follows. This hormone, released from cells in the corpora cardiaca, causes release of diglycerides from the fat body and stimulation of muscles to use these diglycerides as an energy source during energy-demanding processes. In Agrotis ipsilon (Black cutworm moth), this protein is Adipokinetic prohormone type 2.